A 262-amino-acid chain; its full sequence is Nurim (262 aa).

Over 1 to 4 the chain is Nuclear; sequence MAPA. A helical transmembrane segment spans residues 5–28; that stretch reads LLLIPAALASFILAFGTGVEFVRF. Residues 29–58 lie on the Perinuclear space side of the membrane; it reads TSLRPLLGRISESGSPDARQGWLAALQDQS. Residues 59-80 traverse the membrane as a helical segment; the sequence is ILVPLVWDLGLLLLFVGQHSLM. Topologically, residues 81-97 are nuclear; the sequence is ATETVKEWMSRYFGVLQ. A helical membrane pass occupies residues 98–114; that stretch reads RSLYVACTALALQLVMR. Residues 115–133 lie on the Perinuclear space side of the membrane; that stretch reads YWEPVPRGPVLWETRTEPW. A helical transmembrane segment spans residues 134–164; that stretch reads ATWVPLLCFVLHVISWLLIFSILLVFDYAEL. Over 165-191 the chain is Nuclear; it reads MGLKQVYYHVLGLGEPLALKSPRALRL. The chain crosses the membrane as a helical span at residues 192–210; the sequence is FSHLRHPVCVELLTVLWVV. Residues 211–216 are Perinuclear space-facing; it reads PTLGTD. A helical transmembrane segment spans residues 217–234; the sequence is RLLLALLLTLYLGLAHGL. At 235–262 the chain is on the nuclear side; the sequence is DQHDLRYLRAQLQRKLHLLSRPQDGEAE.

This sequence belongs to the nurim family.

It is found in the nucleus inner membrane. This chain is Nurim (NRM), found in Bos taurus (Bovine).